Here is a 120-residue protein sequence, read N- to C-terminus: NAD(P)H-quinone oxidoreductase subunit 3, chloroplastic (120 aa).

3 helical membrane passes run 9-29, 64-84, and 88-108; these read IFWT…LISG, MFAL…PWAM, and VLGV…IVGS.

This sequence belongs to the complex I subunit 3 family. In terms of assembly, NDH is composed of at least 16 different subunits, 5 of which are encoded in the nucleus.

Its subcellular location is the plastid. The protein localises to the chloroplast thylakoid membrane. It catalyses the reaction a plastoquinone + NADH + (n+1) H(+)(in) = a plastoquinol + NAD(+) + n H(+)(out). The catalysed reaction is a plastoquinone + NADPH + (n+1) H(+)(in) = a plastoquinol + NADP(+) + n H(+)(out). NDH shuttles electrons from NAD(P)H:plastoquinone, via FMN and iron-sulfur (Fe-S) centers, to quinones in the photosynthetic chain and possibly in a chloroplast respiratory chain. The immediate electron acceptor for the enzyme in this species is believed to be plastoquinone. Couples the redox reaction to proton translocation, and thus conserves the redox energy in a proton gradient. This chain is NAD(P)H-quinone oxidoreductase subunit 3, chloroplastic, found in Piper cenocladum (Ant piper).